The primary structure comprises 225 residues: Probable methylthioribulose-1-phosphate dehydratase (225 aa).

Cys86 contributes to the substrate binding site. Positions 104 and 106 each coordinate Zn(2+). Residue Glu127 is the Proton donor/acceptor of the active site. His183 serves as a coordination point for Zn(2+).

This sequence belongs to the aldolase class II family. MtnB subfamily. The cofactor is Zn(2+).

It is found in the cytoplasm. It carries out the reaction 5-(methylsulfanyl)-D-ribulose 1-phosphate = 5-methylsulfanyl-2,3-dioxopentyl phosphate + H2O. It functions in the pathway amino-acid biosynthesis; L-methionine biosynthesis via salvage pathway; L-methionine from S-methyl-5-thio-alpha-D-ribose 1-phosphate: step 2/6. Functionally, catalyzes the dehydration of methylthioribulose-1-phosphate (MTRu-1-P) into 2,3-diketo-5-methylthiopentyl-1-phosphate (DK-MTP-1-P). The protein is Probable methylthioribulose-1-phosphate dehydratase of Leishmania infantum.